Consider the following 337-residue polypeptide: Putative F-box protein At4g09870 (337 aa).

One can recognise an F-box domain in the interval 1 to 46 (MSISELSQDLLEEILCRVPAISLKKLRSTCKLWNSLFIDKRVRNEL).

This Arabidopsis thaliana (Mouse-ear cress) protein is Putative F-box protein At4g09870.